A 111-amino-acid polypeptide reads, in one-letter code: Latartoxin-2b (111 aa).

Residues 1 to 19 form the signal peptide; that stretch reads MKVLVIIALCFFILQTALS. Positions 20 to 43 are cleaved as a propeptide — removed in mature form; it reads EDKYESFESYVEDLKSGNMKGEAR. A Processing quadruplet motif motif is present at residues 40-43; sequence GEAR. 5 cysteine pairs are disulfide-bonded: Cys45/Cys62, Cys52/Cys73, Cys61/Cys87, Cys75/Cys85, and Cys78/Cys99. Val110 carries the valine amide modification.

This sequence belongs to the neurotoxin 19 (CSTX) family. 11 (latartoxin) subfamily. Post-translationally, contains 5 disulfide bonds. In terms of processing, cleavage of the propeptide depends on the processing quadruplet motif (XXXR, with at least one of X being E). As to expression, expressed by the venom gland.

The protein localises to the secreted. Insect toxin. The chain is Latartoxin-2b from Lachesana tarabaevi (Spider).